Here is a 420-residue protein sequence, read N- to C-terminus: Mannose-1-phosphate guanylyltransferase regulatory subunit alpha (420 aa).

Residues 2-251 (LKAVILIGGP…DGIWSQIKSA (250 aa)) are substrate-binding domain. Positions 85 and 247 each coordinate GDP-alpha-D-mannose. The hexapeptide repeat domain stretch occupies residues 273-420 (LAKHTPGGPW…SRSFTNQIIL (148 aa)). A C-loop region spans residues 356–384 (TPSDPNPNDPRARMDSESLFKDGKLLPAI).

Belongs to the transferase hexapeptide repeat family. As to quaternary structure, component of the GMPPA-GMPPB mannose-1-phosphate guanylyltransferase complex composed of 4 GMPPA subunits and 8 GMPPB subunits; the complex is organized into three layers, a central layer made up of 2 GMPPA dimers sandwiched between two layers each made up of 2 GMPPB dimers. In terms of tissue distribution, expressed in fibroblasts (at protein level).

The protein localises to the cytoplasm. Its function is as follows. Regulatory subunit of the GMPPA-GMPPB mannose-1-phosphate guanylyltransferase complex; reduces the catalytic activity of GMPPB when part of the complex. Mediates allosteric feedback inhibition of GMPPB catalytic activity upon binding GDP-alpha-D-mannose. Together with GMPPB regulates GDP-alpha-D-mannose levels. This Homo sapiens (Human) protein is Mannose-1-phosphate guanylyltransferase regulatory subunit alpha.